We begin with the raw amino-acid sequence, 947 residues long: Cell adhesion molecule CEACAM5 (947 aa).

Residues 1–34 (MEASSVLPCKWCTHLQGLLLTASFLTCCHLPTTA) form the signal peptide. Ig-like V-type domains lie at 35–132 (QITI…EIVS), 166–259 (SEGG…VQLY), 270–378 (PLQV…LHVN), 392–498 (RLSI…LQLD), 509–615 (QVKI…LHVN), 642–733 (GESV…VQLQ), and 746–851 (DQLI…VQVH). Residues N57, N103, N110, N207, N224, N341, N461, N472, N578, N698, N709, N816, and N823 are each glycosylated (N-linked (GlcNAc...) asparagine). The Ig-like C2-type 1 domain occupies 859–943 (PFVRVTDTTV…SKSSLPVRLA (85 aa)). C878 and C926 are joined by a disulfide.

Belongs to the immunoglobulin superfamily. CEA family. Homodimer.

The protein resides in the cell membrane. It localises to the apical cell membrane. It is found in the cell surface. Its function is as follows. Cell surface glycoprotein that plays a role in cell adhesion, intracellular signaling and tumor progression. Mediates homophilic and heterophilic cell adhesion with other carcinoembryonic antigen-related cell adhesion molecules, such as CEACAM6. Plays a role as an oncogene by promoting tumor progression; induces resistance to anoikis of colorectal carcinoma cells. This Mus musculus (Mouse) protein is Cell adhesion molecule CEACAM5.